Consider the following 318-residue polypeptide: Putative enoyl-CoA hydratase EchA13 (318 aa).

Residues 90–110 (LGSADDIRERSPGPDQHPSYR) are disordered.

It belongs to the enoyl-CoA hydratase/isomerase family.

This is Putative enoyl-CoA hydratase EchA13 (echA13) from Mycobacterium tuberculosis (strain ATCC 25618 / H37Rv).